The primary structure comprises 140 residues: Small ribosomal subunit protein uS12 (140 aa).

Asp102 bears the 3-methylthioaspartic acid mark.

The protein belongs to the universal ribosomal protein uS12 family. Part of the 30S ribosomal subunit. Contacts proteins S8 and S17. May interact with IF1 in the 30S initiation complex.

In terms of biological role, with S4 and S5 plays an important role in translational accuracy. Its function is as follows. Interacts with and stabilizes bases of the 16S rRNA that are involved in tRNA selection in the A site and with the mRNA backbone. Located at the interface of the 30S and 50S subunits, it traverses the body of the 30S subunit contacting proteins on the other side and probably holding the rRNA structure together. The combined cluster of proteins S8, S12 and S17 appears to hold together the shoulder and platform of the 30S subunit. The sequence is that of Small ribosomal subunit protein uS12 from Bacillus cytotoxicus (strain DSM 22905 / CIP 110041 / 391-98 / NVH 391-98).